Consider the following 355-residue polypeptide: 4-dimethylallyltryptophan N-methyltransferase easF (355 aa).

Belongs to the methyltransferase superfamily. As to quaternary structure, homodimer.

The enzyme catalyses 4-(3-methylbut-2-enyl)-L-tryptophan + S-adenosyl-L-methionine = 4-(3-methylbut-2-enyl)-L-abrine + S-adenosyl-L-homocysteine + H(+). It participates in alkaloid biosynthesis; ergot alkaloid biosynthesis. Its function is as follows. 4-dimethylallyltryptophan N-methyltransferase; part of the gene cluster that mediates the biosynthesis of fungal ergot alkaloid. DmaW catalyzes the first step of ergot alkaloid biosynthesis by condensing dimethylallyl diphosphate (DMAP) and tryptophan to form 4-dimethylallyl-L-tryptophan. The second step is catalyzed by the methyltransferase easF that methylates 4-dimethylallyl-L-tryptophan in the presence of S-adenosyl-L-methionine, resulting in the formation of 4-dimethylallyl-L-abrine. The catalase easC and the FAD-dependent oxidoreductase easE then transform 4-dimethylallyl-L-abrine to chanoclavine-I which is further oxidized by easD in the presence of NAD(+), resulting in the formation of chanoclavine-I aldehyde. Agroclavine dehydrogenase easG then mediates the conversion of chanoclavine-I aldehyde to agroclavine via a non-enzymatic adduct reaction: the substrate is an iminium intermediate that is formed spontaneously from chanoclavine-I aldehyde in the presence of glutathione. Further conversion of agroclavine to paspalic acid is a two-step process involving oxidation of agroclavine to elymoclavine and of elymoclavine to paspalic acid, the second step being performed by the elymoclavine oxidase cloA. However, cloA does not encode a functional enzyme indicating that C.fusiformis terminates its ergot alkaloid pathway at elymoclavine. The chain is 4-dimethylallyltryptophan N-methyltransferase easF from Claviceps fusiformis (Ergot fungus).